Here is a 116-residue protein sequence, read N- to C-terminus: HTH-type transcriptional regulator SarV (116 aa).

The H-T-H motif DNA-binding region spans 51 to 74 (RDTLHFEMLWDTSKIDVIIRKIYK).

Belongs to the SarA family.

It is found in the cytoplasm. Functionally, part of the pathway by which MgrA and SarA control autolysis. This is HTH-type transcriptional regulator SarV (sarV) from Staphylococcus aureus (strain Mu50 / ATCC 700699).